Here is an 88-residue protein sequence, read N- to C-terminus: Putative membrane protein insertion efficiency factor (88 aa).

It belongs to the UPF0161 family.

It localises to the cell inner membrane. Its function is as follows. Could be involved in insertion of integral membrane proteins into the membrane. The sequence is that of Putative membrane protein insertion efficiency factor from Prochlorococcus marinus (strain MIT 9313).